Here is a 301-residue protein sequence, read N- to C-terminus: MQIFIGKIPNHVSEEQIKEYFGQFGEVTDVSLKGTYGFLNFDSEGSITRVLNQRTHSIDGAPISVERANGRKRPLDGEYHDRYMDMGRGGYSPHRDYRGFRNAPYPPMRYESRSPGRYDPRFSDRYGGRSPEYRGDSFRMGDPQRSRDFCEYCNACPIHGMRDMMDSRKRHHMSRDHPNNHLKVVFENIAPNTAIEDFKNFVQDHGFEPSYARLGYSGNHAVFEFKNIEDKDNAMKKLDGAEFNGHILKTRSYLSKDEYKSRERESHMRSELQPTDNGEAEPQGTTTDIYEGIEDAKAEND.

One can recognise an RRM 1 domain in the interval 1–70; that stretch reads MQIFIGKIPN…APISVERANG (70 aa). Disordered stretches follow at residues 106–140 and 255–301; these read PPMRYESRSPGRYDPRFSDRYGGRSPEYRGDSFRM and SKDE…AEND. 2 stretches are compositionally biased toward basic and acidic residues: residues 110 to 140 and 255 to 270; these read YESRSPGRYDPRFSDRYGGRSPEYRGDSFRM and SKDEYKSRERESHMRS. Residues 182–255 form the RRM 2 domain; sequence LKVVFENIAP…HILKTRSYLS (74 aa).

The protein belongs to the splicing factor SR family.

The protein localises to the nucleus. In terms of biological role, plays a role in splicing. This chain is Probable splicing factor ECU05_1440, found in Encephalitozoon cuniculi (strain GB-M1) (Microsporidian parasite).